A 473-amino-acid polypeptide reads, in one-letter code: LETM1 domain-containing protein mdm28, mitochondrial (473 aa).

The transit peptide at 1 to 73 directs the protein to the mitochondrion; it reads MLRNRLFKTP…FYNIGSSRLY (73 aa). At 74–161 the chain is on the mitochondrial intermembrane side; the sequence is STETPTPSKV…LTRTLKDIGR (88 aa). Residues 162–182 form a helical membrane-spanning segment; the sequence is LVPFSVFVVVPFAELLLPIAV. The Mitochondrial matrix segment spans residues 183–473; it reads KLFPNLLPST…ESNIPKNERK (291 aa). Residues 205–398 enclose the Letm1 RBD domain; it reads QLRKTRNEVS…LQDTLASIPD (194 aa). Residues 430 to 473 form a disordered region; that stretch reads EEEAEHVAEHPDLAKKQTEENKATSKPAVSAKSPESNIPKNERK. Positions 434-452 are enriched in basic and acidic residues; it reads EHVAEHPDLAKKQTEENKA. Polar residues predominate over residues 462-473; the sequence is SPESNIPKNERK.

It is found in the mitochondrion inner membrane. Involved in mitochondrial potassium homeostasis through the mitochondrial K(+)/H(+) exchange regulation. This is LETM1 domain-containing protein mdm28, mitochondrial (mdm28) from Schizosaccharomyces pombe (strain 972 / ATCC 24843) (Fission yeast).